Reading from the N-terminus, the 360-residue chain is Photosystem II protein D1 (360 aa).

Topologically, residues 1–28 (MTTTLQRRESANLWERFCNWVTSTDNRL) are cytoplasmic. Residues 29 to 46 (YVGWFGVIMIPTLLAATI) form a helical membrane-spanning segment. The Lumenal segment spans residues 47-117 (CFVIAFIAAP…NGGPYQLIIF (71 aa)). His118 contacts chlorophyll a. A helical membrane pass occupies residues 118 to 133 (HFLLGASCYMGRQWEL). 2 residues coordinate pheophytin a: Tyr126 and Gln130. Topologically, residues 134–141 (SYRLGMRP) are cytoplasmic. The helical transmembrane segment at 142 to 156 (WICVAYSAPLASAFA) threads the bilayer. Tyr147 contacts pheophytin a. Residues 157–196 (VFLIYPIGQGSFSDGMPLGISGTFNFMIVFQAEHNILMHP) lie on the Lumenal side of the membrane. 2 residues coordinate [CaMn4O5] cluster: Asp170 and Glu189. Residues 197 to 218 (FHQLGVAGVFGGALFCAMHGSL) traverse the membrane as a helical segment. His198 contributes to the chlorophyll a binding site. Met214 provides a ligand contact to pheophytin a. A quinone-binding positions include His215 and 264 to 265 (SF). His215 is a Fe cation binding site. Over 219 to 273 (VTSSLIRETTETESANYGYKFGQEEETYNIVAAHGYFGRLIFQYASFNNSRSLHF) the chain is Cytoplasmic. Fe cation is bound at residue His272. Residues 274–288 (FLAAWRVVGVWFAAL) form a helical membrane-spanning segment. Residues 289 to 360 (GISTMAFNLN…VAMIAPSING (72 aa)) lie on the Lumenal side of the membrane. Residues His332, Glu333, Asp342, and Ala344 each contribute to the [CaMn4O5] cluster site. Residues 345 to 360 (SAESAPVAMIAPSING) constitute a propeptide that is removed on maturation.

It belongs to the reaction center PufL/M/PsbA/D family. PSII is composed of 1 copy each of membrane proteins PsbA, PsbB, PsbC, PsbD, PsbE, PsbF, PsbH, PsbI, PsbJ, PsbK, PsbL, PsbM, PsbT, PsbX, PsbY, PsbZ, Psb30/Ycf12, peripheral proteins PsbO, CyanoQ (PsbQ), PsbU, PsbV and a large number of cofactors. It forms dimeric complexes. Requires The D1/D2 heterodimer binds P680, chlorophylls that are the primary electron donor of PSII, and subsequent electron acceptors. It shares a non-heme iron and each subunit binds pheophytin, quinone, additional chlorophylls, carotenoids and lipids. D1 provides most of the ligands for the Mn4-Ca-O5 cluster of the oxygen-evolving complex (OEC). There is also a Cl(-1) ion associated with D1 and D2, which is required for oxygen evolution. The PSII complex binds additional chlorophylls, carotenoids and specific lipids. as cofactor. Post-translationally, C-terminally processed by CtpA; processing is essential to allow assembly of the oxygen-evolving complex and thus photosynthetic growth. Tyr-161 forms a radical intermediate that is referred to as redox-active TyrZ, YZ or Y-Z.

The protein localises to the cellular thylakoid membrane. The catalysed reaction is 2 a plastoquinone + 4 hnu + 2 H2O = 2 a plastoquinol + O2. Its function is as follows. Photosystem II (PSII) is a light-driven water:plastoquinone oxidoreductase that uses light energy to abstract electrons from H(2)O, generating O(2) and a proton gradient subsequently used for ATP formation. It consists of a core antenna complex that captures photons, and an electron transfer chain that converts photonic excitation into a charge separation. The D1/D2 (PsbA/PsbD) reaction center heterodimer binds P680, the primary electron donor of PSII as well as several subsequent electron acceptors. In Thermostichus vulcanus (Synechococcus vulcanus), this protein is Photosystem II protein D1.